We begin with the raw amino-acid sequence, 352 residues long: Mas-related G-protein coupled receptor member X2 (352 aa).

The Extracellular portion of the chain corresponds to 1–45; sequence MEERNISGRDLRVDSNITYWGTNITAVNESNHTGMSFCEVVSCTM. N-linked (GlcNAc...) asparagine glycosylation is found at N5, N16, N23, N28, and N31. A helical transmembrane segment spans residues 46–66; the sequence is VFLSLIVALVGLVGNATVLWF. Topologically, residues 67-75 are cytoplasmic; that stretch reads LGFQMRRNA. Residues 76-96 traverse the membrane as a helical segment; that stretch reads FSVYILNLAGADFLFICFQIG. Over 97–107 the chain is Extracellular; that stretch reads YCFHMILDIDS. The chain crosses the membrane as a helical span at residues 108-128; it reads IPIEIDLFYLVVLNFPYFCGL. Residues 129 to 155 lie on the Cytoplasmic side of the membrane; sequence SILSAISIERCLSVMWPIWYHCQRPRH. Residues 156–176 traverse the membrane as a helical segment; that stretch reads TSAVICTLLWVLSLVCSLLEG. The Extracellular portion of the chain corresponds to 177–195; sequence KECGFLYYTSDPGWCKTFD. The chain crosses the membrane as a helical span at residues 196 to 216; it reads LITATWLIVLFVALLGSSLAL. The Cytoplasmic portion of the chain corresponds to 217–239; it reads VITIFWGLHKIPVTRLYVAIVFT. Residues 240 to 260 form a helical membrane-spanning segment; sequence VLVFLLFGLPYGIYWFLLVWI. The Extracellular portion of the chain corresponds to 261–275; it reads EKFYYVLPCSIYPVT. Residues 276–296 traverse the membrane as a helical segment; that stretch reads VFLSCVNSSAKPIIYCLVGSI. At 297-347 the chain is on the cytoplasmic side; it reads RHHRFQRKTLKLFLQRAMQDTPEEEECGEMGSSGRSREIKTIWKGLRAALI.

Belongs to the G-protein coupled receptor 1 family. Mas subfamily.

The protein localises to the cell membrane. Functionally, orphan receptor. Probably involved in the function of nociceptive neurons. May regulate nociceptor function and/or development, including the sensation or modulation of pain. In Mus musculus (Mouse), this protein is Mas-related G-protein coupled receptor member X2 (Mrgprx2).